The primary structure comprises 83 residues: Large ribosomal subunit protein eL37 (83 aa).

Zn(2+) is bound by residues cysteine 19, cysteine 22, cysteine 34, and cysteine 37. The C4-type zinc-finger motif lies at 19-37 (CRRCGRNSYHVQWERCAAC).

Belongs to the eukaryotic ribosomal protein eL37 family. The cofactor is Zn(2+).

Binds to the 23S rRNA. The sequence is that of Large ribosomal subunit protein eL37 (RPL37) from Leishmania donovani.